A 415-amino-acid polypeptide reads, in one-letter code: Tyrosine--tRNA ligase (415 aa).

Position 33 (tyrosine 33) interacts with L-tyrosine. Residues proline 38 to asparagine 47 carry the 'HIGH' region motif. L-tyrosine is bound by residues tyrosine 161 and glutamine 165. Residues lysine 225 to serine 229 carry the 'KMSKS' region motif. Lysine 228 contacts ATP. An S4 RNA-binding domain is found at methionine 350–lysine 414.

Belongs to the class-I aminoacyl-tRNA synthetase family. TyrS type 1 subfamily. In terms of assembly, homodimer.

The protein resides in the cytoplasm. The catalysed reaction is tRNA(Tyr) + L-tyrosine + ATP = L-tyrosyl-tRNA(Tyr) + AMP + diphosphate + H(+). In terms of biological role, catalyzes the attachment of tyrosine to tRNA(Tyr) in a two-step reaction: tyrosine is first activated by ATP to form Tyr-AMP and then transferred to the acceptor end of tRNA(Tyr). This chain is Tyrosine--tRNA ligase, found in Mycoplasmoides gallisepticum (strain R(low / passage 15 / clone 2)) (Mycoplasma gallisepticum).